The following is a 188-amino-acid chain: Pyridoxal 5'-phosphate synthase subunit PdxT (188 aa).

Residue 47-49 (GES) participates in L-glutamine binding. C79 serves as the catalytic Nucleophile. L-glutamine contacts are provided by residues R105 and 134–135 (IR). Catalysis depends on charge relay system residues H170 and E172.

Belongs to the glutaminase PdxT/SNO family. In terms of assembly, in the presence of PdxS, forms a dodecamer of heterodimers. Only shows activity in the heterodimer.

The catalysed reaction is aldehydo-D-ribose 5-phosphate + D-glyceraldehyde 3-phosphate + L-glutamine = pyridoxal 5'-phosphate + L-glutamate + phosphate + 3 H2O + H(+). It catalyses the reaction L-glutamine + H2O = L-glutamate + NH4(+). Its pathway is cofactor biosynthesis; pyridoxal 5'-phosphate biosynthesis. In terms of biological role, catalyzes the hydrolysis of glutamine to glutamate and ammonia as part of the biosynthesis of pyridoxal 5'-phosphate. The resulting ammonia molecule is channeled to the active site of PdxS. The sequence is that of Pyridoxal 5'-phosphate synthase subunit PdxT from Listeria innocua serovar 6a (strain ATCC BAA-680 / CLIP 11262).